The chain runs to 792 residues: Ribonucleoside-diphosphate reductase large subunit (792 aa).

An ATP-cone domain is found at 1-92 (MHVIKRDGRQ…VSNLHKETKK (92 aa)). ATP contacts are provided by residues 5–6 (KR), 11–17 (ERVMFDK), Thr53, and Asp57. Lys17 carries the post-translational modification N6-acetyllysine. 2 residues coordinate GDP: Ser202 and Ser217. Cys218 and Cys444 are joined by a disulfide. Residues 226 to 228 (DSI), Lys243, Arg256, and 263 to 264 (AG) each bind dTTP. At Lys376 the chain carries N6-acetyllysine. Asn427 contacts GDP. Asn427 (proton acceptor) is an active-site residue. Cys429 serves as the catalytic Cysteine radical intermediate. Residues Glu431 and 604-607 (TAST) contribute to the GDP site. Residue Glu431 is the Proton acceptor of the active site. Residue Thr751 is modified to Phosphothreonine.

This sequence belongs to the ribonucleoside diphosphate reductase large chain family. As to quaternary structure, heterodimer of a large and a small subunit. Interacts with RRM2B. Interacts with AHCYL1 which inhibits its activity.

It is found in the cytoplasm. The enzyme catalyses a 2'-deoxyribonucleoside 5'-diphosphate + [thioredoxin]-disulfide + H2O = a ribonucleoside 5'-diphosphate + [thioredoxin]-dithiol. With respect to regulation, under complex allosteric control mediated by deoxynucleoside triphosphates and ATP binding to separate specificity and activation sites on the M1 subunit. The type of nucleotide bound at the specificity site determines substrate preference. It seems probable that ATP makes the enzyme reduce CDP and UDP, dGTP favors ADP reduction and dTTP favors GDP reduction. Stimulated by ATP and inhibited by dATP binding to the activity site, the dATP inhibition is mediated by AHCYL1 which stabilizes dATP in the site. Provides the precursors necessary for DNA synthesis. Catalyzes the biosynthesis of deoxyribonucleotides from the corresponding ribonucleotides. The polypeptide is Ribonucleoside-diphosphate reductase large subunit (Rrm1) (Mus musculus (Mouse)).